A 206-amino-acid polypeptide reads, in one-letter code: FMN-dependent NADH:quinone oxidoreductase (206 aa).

Residues 15–17 (SVS), 94–97 (MYNF), and 138–141 (TRGG) each bind FMN.

Belongs to the azoreductase type 1 family. As to quaternary structure, homodimer. FMN is required as a cofactor.

The enzyme catalyses 2 a quinone + NADH + H(+) = 2 a 1,4-benzosemiquinone + NAD(+). It carries out the reaction N,N-dimethyl-1,4-phenylenediamine + anthranilate + 2 NAD(+) = 2-(4-dimethylaminophenyl)diazenylbenzoate + 2 NADH + 2 H(+). In terms of biological role, quinone reductase that provides resistance to thiol-specific stress caused by electrophilic quinones. Its function is as follows. Also exhibits azoreductase activity. Catalyzes the reductive cleavage of the azo bond in aromatic azo compounds to the corresponding amines. In Sinorhizobium fredii (strain NBRC 101917 / NGR234), this protein is FMN-dependent NADH:quinone oxidoreductase.